Here is a 488-residue protein sequence, read N- to C-terminus: Glutamyl-tRNA(Gln) amidotransferase subunit A (488 aa).

Active-site charge relay system residues include K76 and S152. S176 functions as the Acyl-ester intermediate in the catalytic mechanism.

This sequence belongs to the amidase family. GatA subfamily. As to quaternary structure, heterotrimer of A, B and C subunits.

The catalysed reaction is L-glutamyl-tRNA(Gln) + L-glutamine + ATP + H2O = L-glutaminyl-tRNA(Gln) + L-glutamate + ADP + phosphate + H(+). Its function is as follows. Allows the formation of correctly charged Gln-tRNA(Gln) through the transamidation of misacylated Glu-tRNA(Gln) in organisms which lack glutaminyl-tRNA synthetase. The reaction takes place in the presence of glutamine and ATP through an activated gamma-phospho-Glu-tRNA(Gln). The sequence is that of Glutamyl-tRNA(Gln) amidotransferase subunit A from Oceanobacillus iheyensis (strain DSM 14371 / CIP 107618 / JCM 11309 / KCTC 3954 / HTE831).